The primary structure comprises 190 residues: Probable RNA-binding protein 18 (190 aa).

One can recognise an RRM domain in the interval 25–106 (HRLWIGNLDP…KKLVVRWAHA (82 aa)). The disordered stretch occupies residues 166–190 (VYSYFKPPDKKRTTPYSRTAWKSRR).

The sequence is that of Probable RNA-binding protein 18 (RBM18) from Bos taurus (Bovine).